Here is a 101-residue protein sequence, read N- to C-terminus: Urease subunit beta (101 aa).

This sequence belongs to the urease beta subunit family. Heterotrimer of UreA (gamma), UreB (beta) and UreC (alpha) subunits. Three heterotrimers associate to form the active enzyme.

It localises to the cytoplasm. It carries out the reaction urea + 2 H2O + H(+) = hydrogencarbonate + 2 NH4(+). It participates in nitrogen metabolism; urea degradation; CO(2) and NH(3) from urea (urease route): step 1/1. The chain is Urease subunit beta from Saccharophagus degradans (strain 2-40 / ATCC 43961 / DSM 17024).